The following is a 61-amino-acid chain: Large ribosomal subunit protein uL29 (61 aa).

It belongs to the universal ribosomal protein uL29 family.

In Stenotrophomonas maltophilia (strain R551-3), this protein is Large ribosomal subunit protein uL29.